The sequence spans 184 residues: Acireductone dioxygenase 4 (184 aa).

Fe(2+) is bound by residues His-86, His-88, Glu-92, and His-131. Ni(2+) is bound by residues His-86, His-88, Glu-92, and His-131.

The protein belongs to the acireductone dioxygenase (ARD) family. Fe(2+) is required as a cofactor. It depends on Ni(2+) as a cofactor.

The protein resides in the cytoplasm. Its subcellular location is the nucleus. It carries out the reaction 1,2-dihydroxy-5-(methylsulfanyl)pent-1-en-3-one + O2 = 4-methylsulfanyl-2-oxobutanoate + formate + 2 H(+). The catalysed reaction is 1,2-dihydroxy-5-(methylsulfanyl)pent-1-en-3-one + O2 = 3-(methylsulfanyl)propanoate + CO + formate + 2 H(+). It participates in amino-acid biosynthesis; L-methionine biosynthesis via salvage pathway; L-methionine from S-methyl-5-thio-alpha-D-ribose 1-phosphate: step 5/6. Catalyzes 2 different reactions between oxygen and the acireductone 1,2-dihydroxy-3-keto-5-methylthiopentene (DHK-MTPene) depending upon the metal bound in the active site. Fe-containing acireductone dioxygenase (Fe-ARD) produces formate and 2-keto-4-methylthiobutyrate (KMTB), the alpha-ketoacid precursor of methionine in the methionine recycle pathway. Ni-containing acireductone dioxygenase (Ni-ARD) produces methylthiopropionate, carbon monoxide and formate, and does not lie on the methionine recycle pathway. This is Acireductone dioxygenase 4 (ARD4) from Oryza sativa subsp. japonica (Rice).